Reading from the N-terminus, the 225-residue chain is NAD(P)H-quinone oxidoreductase subunit K, chloroplastic (225 aa).

Residues C43, C44, C108, and C139 each contribute to the [4Fe-4S] cluster site.

This sequence belongs to the complex I 20 kDa subunit family. In terms of assembly, NDH is composed of at least 16 different subunits, 5 of which are encoded in the nucleus. [4Fe-4S] cluster is required as a cofactor.

It localises to the plastid. Its subcellular location is the chloroplast thylakoid membrane. It catalyses the reaction a plastoquinone + NADH + (n+1) H(+)(in) = a plastoquinol + NAD(+) + n H(+)(out). The catalysed reaction is a plastoquinone + NADPH + (n+1) H(+)(in) = a plastoquinol + NADP(+) + n H(+)(out). In terms of biological role, NDH shuttles electrons from NAD(P)H:plastoquinone, via FMN and iron-sulfur (Fe-S) centers, to quinones in the photosynthetic chain and possibly in a chloroplast respiratory chain. The immediate electron acceptor for the enzyme in this species is believed to be plastoquinone. Couples the redox reaction to proton translocation, and thus conserves the redox energy in a proton gradient. This chain is NAD(P)H-quinone oxidoreductase subunit K, chloroplastic, found in Agrostis stolonifera (Creeping bentgrass).